The following is a 236-amino-acid chain: MTRRYWNINLKEMIEAGVHFGHGIKKWNPKMAPYISAKRKGTHITNLARTTRFLSEACDLVFDAASQGKSFLIVGTKKRAADLVASAAIRARCHYVNKKWFSGMLTNWSITKTRLSQFRDLRAEEKMEKFHHLPKRDVAILKRKLSTLQRYLGGIKYMTRLPDIVIVLDQQKEYIALRECAILGIPTISLADTNCDPDLANISIPANDDTMTSIRLILNKLVFAICEGRSLYIRNH.

The protein belongs to the universal ribosomal protein uS2 family.

It is found in the plastid. Its subcellular location is the chloroplast. This chain is Small ribosomal subunit protein uS2c (rps2), found in Oryza sativa (Rice).